Here is a 704-residue protein sequence, read N- to C-terminus: MPRKTPIERYRNIGISAHIDAGKTTTTERILFYTGVSHKIGEVHDGAATMDWMEQEQERGITITSAATTAFWKGMAGNYPEHRINIIDTPGHVDFTIEVERSMRVLDGACMVYDSVGGVQPQSETVWRQANKYKVPRIAFVNKMDRVGADFFRVQRQIGERLKGVAVPIQIPVGAEEHFQGVVDLVKMKAIVWDDESQGVKFTYEDIPANLVELAHEWREKMVEAAAEASEELLEKYLTDHNSLTEDEIKAALRKRTIANEIVPMLCGSAFKNKGVQAMLDAVIDYLPSPADVPAILGHDLDDKEAERHPSDDEPFSALAFKIMTDPFVGQLIFFRVYSGVVESGDTLLNATKDKKERLGRILQMHANERKEIKEVRAGDIAAAVGLKEATTGDTLCDPGKPIILEKMEFPEPVISQAVEPKTKADQEKMGLALNRLAQEDPSFRVQTDEESGQTIISGMGELHLEIIVDRMKREFGVEATVGKPQVAYRETVRTVAEDVEGKFVKQSGGRGQYGHAVIKLEPNPGKGYEFLDEIKGGVIPREFIPAVNKGIEETLKSGVLAGYPVVDVKVHLTFGSYHDVDSNENAFRMAGSMAFKEAMRRAKPVLLEPMMAVEVETPEDFMGNVMGDLSSRRGIVQGMEDIAGGGGKLVRAEVPLAEMFGYSTSLRSATQGRATYTMEFKHYAETPSNVSEAVINAKQVGRG.

The tr-type G domain maps to 8-291; that stretch reads ERYRNIGISA…AVIDYLPSPA (284 aa). Residues 17 to 24, 88 to 92, and 142 to 145 each bind GTP; these read AHIDAGKT, DTPGH, and NKMD.

It belongs to the TRAFAC class translation factor GTPase superfamily. Classic translation factor GTPase family. EF-G/EF-2 subfamily.

Its subcellular location is the cytoplasm. In terms of biological role, catalyzes the GTP-dependent ribosomal translocation step during translation elongation. During this step, the ribosome changes from the pre-translocational (PRE) to the post-translocational (POST) state as the newly formed A-site-bound peptidyl-tRNA and P-site-bound deacylated tRNA move to the P and E sites, respectively. Catalyzes the coordinated movement of the two tRNA molecules, the mRNA and conformational changes in the ribosome. The protein is Elongation factor G 1 of Burkholderia mallei (strain ATCC 23344).